The sequence spans 336 residues: Dihydroorotate dehydrogenase (quinone) (336 aa).

FMN contacts are provided by residues 62–66 (AGLDK) and T86. K66 serves as a coordination point for substrate. 111-115 (NRMGF) contributes to the substrate binding site. Positions 139 and 172 each coordinate FMN. N172 provides a ligand contact to substrate. S175 serves as the catalytic Nucleophile. N177 lines the substrate pocket. The FMN site is built by K217 and T245. Substrate is bound at residue 246-247 (NT). FMN is bound by residues G268, G297, and 318–319 (YS).

Belongs to the dihydroorotate dehydrogenase family. Type 2 subfamily. In terms of assembly, monomer. Requires FMN as cofactor.

The protein localises to the cell membrane. It catalyses the reaction (S)-dihydroorotate + a quinone = orotate + a quinol. It functions in the pathway pyrimidine metabolism; UMP biosynthesis via de novo pathway; orotate from (S)-dihydroorotate (quinone route): step 1/1. Functionally, catalyzes the conversion of dihydroorotate to orotate with quinone as electron acceptor. In Baumannia cicadellinicola subsp. Homalodisca coagulata, this protein is Dihydroorotate dehydrogenase (quinone).